We begin with the raw amino-acid sequence, 394 residues long: Galactose-3-O-sulfotransferase 2 (394 aa).

Residues 1-8 (MWGSQHRS) are Cytoplasmic-facing. Residues 9–29 (FQVALWFLVLAVFLLVGFLHV) form a helical; Signal-anchor for type II membrane protein membrane-spanning segment. Over 30 to 394 (DFRLLIPDKV…TPKDIPFLKK (365 aa)) the chain is Lumenal. Residues Asn72, Asn176, Asn284, and Asn326 are each glycosylated (N-linked (GlcNAc...) asparagine).

The protein belongs to the galactose-3-O-sulfotransferase family.

It is found in the golgi apparatus. It localises to the golgi stack membrane. Its pathway is protein modification; carbohydrate sulfation. Strongly inhibited by Cu(2+) and Zn(2+). In terms of biological role, transfers a sulfate group to the hydroxyl group at C3 of non-reducing beta-galactosyl residues. Acts both on type 1 (Gal-beta-1,3-GlcNAc) and type 2 (Gal-beta-1,4-GlcNAc) chains with similar efficiency. The sequence is that of Galactose-3-O-sulfotransferase 2 (Gal3st2) from Mus musculus (Mouse).